Here is a 428-residue protein sequence, read N- to C-terminus: ATP-dependent RNA helicase RhlB (428 aa).

Residues 9–37 (KKFSDFALHPKVIEALDNKGFSNCTPIQA) carry the Q motif motif. The 180-residue stretch at 40 to 219 (LPFTVEGRDV…FEQMNHAEYI (180 aa)) folds into the Helicase ATP-binding domain. Residue 53 to 60 (AQTGTGKT) coordinates ATP. The DEAD box motif lies at 165-168 (DEAD). Positions 245–390 (RLLQTLLEEE…VSKYNSQALL (146 aa)) constitute a Helicase C-terminal domain. Residues 392–428 (DLPAPKRRYRSRSGNHQRRNNLSHRNNTPRNNRKRSG) are disordered. The segment covering 396 to 413 (PKRRYRSRSGNHQRRNNL) has biased composition (basic residues).

The protein belongs to the DEAD box helicase family. RhlB subfamily. In terms of assembly, component of the RNA degradosome, which is a multiprotein complex involved in RNA processing and mRNA degradation.

The protein localises to the cytoplasm. It carries out the reaction ATP + H2O = ADP + phosphate + H(+). In terms of biological role, DEAD-box RNA helicase involved in RNA degradation. Has RNA-dependent ATPase activity and unwinds double-stranded RNA. This chain is ATP-dependent RNA helicase RhlB, found in Photorhabdus laumondii subsp. laumondii (strain DSM 15139 / CIP 105565 / TT01) (Photorhabdus luminescens subsp. laumondii).